Here is a 326-residue protein sequence, read N- to C-terminus: tRNA uridine(34) hydroxylase (326 aa).

In terms of domain architecture, Rhodanese spans 123 to 217 (SDPDVLLVDT…YLEEVKQEES (95 aa)). Residue Cys-177 is the Cysteine persulfide intermediate of the active site. A disordered region spans residues 304-326 (VSQVILSRRTEKEDQRQAQNKKA).

This sequence belongs to the TrhO family.

The enzyme catalyses uridine(34) in tRNA + AH2 + O2 = 5-hydroxyuridine(34) in tRNA + A + H2O. Its function is as follows. Catalyzes oxygen-dependent 5-hydroxyuridine (ho5U) modification at position 34 in tRNAs. The polypeptide is tRNA uridine(34) hydroxylase (Shewanella sediminis (strain HAW-EB3)).